A 257-amino-acid chain; its full sequence is Thiazole synthase (257 aa).

The active-site Schiff-base intermediate with DXP is lysine 98. Residues glycine 159, 185-186 (AG), and 207-208 (NT) contribute to the 1-deoxy-D-xylulose 5-phosphate site.

It belongs to the ThiG family. Homotetramer. Forms heterodimers with either ThiH or ThiS.

Its subcellular location is the cytoplasm. The catalysed reaction is [ThiS sulfur-carrier protein]-C-terminal-Gly-aminoethanethioate + 2-iminoacetate + 1-deoxy-D-xylulose 5-phosphate = [ThiS sulfur-carrier protein]-C-terminal Gly-Gly + 2-[(2R,5Z)-2-carboxy-4-methylthiazol-5(2H)-ylidene]ethyl phosphate + 2 H2O + H(+). The protein operates within cofactor biosynthesis; thiamine diphosphate biosynthesis. Catalyzes the rearrangement of 1-deoxy-D-xylulose 5-phosphate (DXP) to produce the thiazole phosphate moiety of thiamine. Sulfur is provided by the thiocarboxylate moiety of the carrier protein ThiS. In vitro, sulfur can be provided by H(2)S. The protein is Thiazole synthase of Anaeromyxobacter dehalogenans (strain 2CP-C).